The sequence spans 86 residues: Large ribosomal subunit protein bL27 (86 aa).

The tract at residues 1 to 22 (MAHKKAGGSTRNGRDSESKRLG) is disordered.

The protein belongs to the bacterial ribosomal protein bL27 family.

This chain is Large ribosomal subunit protein bL27, found in Vibrio cholerae serotype O1 (strain ATCC 39315 / El Tor Inaba N16961).